Reading from the N-terminus, the 447-residue chain is Tol-Pal system protein TolB (447 aa).

Residues 1-34 (MSSRLPALPLSRRQALLGGAGSAAALLLPGGAQA) form the signal peptide. The disordered stretch occupies residues 426–447 (RNEQKVPTPGFASDPAWSPLLS).

This sequence belongs to the TolB family. The Tol-Pal system is composed of five core proteins: the inner membrane proteins TolA, TolQ and TolR, the periplasmic protein TolB and the outer membrane protein Pal. They form a network linking the inner and outer membranes and the peptidoglycan layer.

The protein localises to the periplasm. Functionally, part of the Tol-Pal system, which plays a role in outer membrane invagination during cell division and is important for maintaining outer membrane integrity. The chain is Tol-Pal system protein TolB from Rhodopseudomonas palustris (strain BisB18).